Here is a 123-residue protein sequence, read N- to C-terminus: uncharacterized protein (123 aa).

Helical transmembrane passes span 9–31 (LLLRFTLEIAALISLGVYAWISF), 38–56 (VLTLVLPIAVMIVWSVFAV), 67–91 (VIAVNGVTRLVIELLIFAMAVAALY), and 98–114 (VSIVFLCLIILHYIISA).

To E.coli YhgE.

It localises to the cell membrane. This is an uncharacterized protein from Bacillus subtilis (strain 168).